The primary structure comprises 158 residues: Copper transporter 2 (158 aa).

The tract at residues 1-20 is disordered; it reads MDHDHMHDMPPPSPSSSSMS. A run of 2 helical transmembrane segments spans residues 53–73 and 104–124; these read GMYA…EWLA and YLVM…AIAG.

The protein belongs to the copper transporter (Ctr) (TC 1.A.56) family. SLC31A subfamily. Highly expressed in leaves and at lower levels in roots, stems and flowers.

Its subcellular location is the membrane. Its function is as follows. Involved in the transport of copper. The polypeptide is Copper transporter 2 (COPT2) (Arabidopsis thaliana (Mouse-ear cress)).